The chain runs to 418 residues: Glutamyl-tRNA reductase (418 aa).

Substrate is bound by residues T49–R52, S109, E114–Q116, and Q120. C50 (nucleophile) is an active-site residue. G189–I194 provides a ligand contact to NADP(+).

This sequence belongs to the glutamyl-tRNA reductase family. In terms of assembly, homodimer.

The catalysed reaction is (S)-4-amino-5-oxopentanoate + tRNA(Glu) + NADP(+) = L-glutamyl-tRNA(Glu) + NADPH + H(+). The protein operates within porphyrin-containing compound metabolism; protoporphyrin-IX biosynthesis; 5-aminolevulinate from L-glutamyl-tRNA(Glu): step 1/2. In terms of biological role, catalyzes the NADPH-dependent reduction of glutamyl-tRNA(Glu) to glutamate 1-semialdehyde (GSA). In Escherichia coli O7:K1 (strain IAI39 / ExPEC), this protein is Glutamyl-tRNA reductase.